We begin with the raw amino-acid sequence, 374 residues long: Lipoyl synthase, mitochondrial (374 aa).

Positions 101, 106, 112, 132, 136, 139, and 347 each coordinate [4Fe-4S] cluster. The region spanning 117–336 (ENGTQTATIM…EERGNDLGFL (220 aa)) is the Radical SAM core domain.

Belongs to the radical SAM superfamily. Lipoyl synthase family. The cofactor is [4Fe-4S] cluster.

The protein resides in the mitochondrion. The catalysed reaction is [[Fe-S] cluster scaffold protein carrying a second [4Fe-4S](2+) cluster] + N(6)-octanoyl-L-lysyl-[protein] + 2 oxidized [2Fe-2S]-[ferredoxin] + 2 S-adenosyl-L-methionine + 4 H(+) = [[Fe-S] cluster scaffold protein] + N(6)-[(R)-dihydrolipoyl]-L-lysyl-[protein] + 4 Fe(3+) + 2 hydrogen sulfide + 2 5'-deoxyadenosine + 2 L-methionine + 2 reduced [2Fe-2S]-[ferredoxin]. The protein operates within protein modification; protein lipoylation via endogenous pathway; protein N(6)-(lipoyl)lysine from octanoyl-[acyl-carrier-protein]: step 2/2. Functionally, catalyzes the radical-mediated insertion of two sulfur atoms into the C-6 and C-8 positions of the octanoyl moiety bound to the lipoyl domains of lipoate-dependent enzymes, thereby converting the octanoylated domains into lipoylated derivatives. The protein is Lipoyl synthase, mitochondrial of Drosophila pseudoobscura pseudoobscura (Fruit fly).